The sequence spans 439 residues: Methionine aminopeptidase 2-1 (439 aa).

The segment at 1–87 (MSGGESRSPD…DKLFPSGNFP (87 aa)) is disordered. The segment covering 22 to 32 (GGDDEESDGDG) has biased composition (acidic residues). Basic residues predominate over residues 47–61 (KKRKKRNKKKSKKKS). H190 serves as a coordination point for substrate. D211, D222, and H291 together coordinate a divalent metal cation. Substrate is bound at residue H299. Positions 324 and 420 each coordinate a divalent metal cation.

Belongs to the peptidase M24A family. Methionine aminopeptidase eukaryotic type 2 subfamily. Requires Co(2+) as cofactor. It depends on Zn(2+) as a cofactor. Mn(2+) is required as a cofactor. Fe(2+) serves as cofactor.

It is found in the cytoplasm. The enzyme catalyses Release of N-terminal amino acids, preferentially methionine, from peptides and arylamides.. Cotranslationally removes the N-terminal methionine from nascent proteins. The N-terminal methionine is often cleaved when the second residue in the primary sequence is small and uncharged (Met-Ala-, Cys, Gly, Pro, Ser, Thr, or Val). The protein is Methionine aminopeptidase 2-1 of Chaetomium globosum (strain ATCC 6205 / CBS 148.51 / DSM 1962 / NBRC 6347 / NRRL 1970) (Soil fungus).